The sequence spans 74 residues: Brevinin-2Ef (74 aa).

Positions 1–22 (MFTMKKSLLLIFFLGTISLSLC) are cleaved as a signal peptide. A propeptide spanning residues 23–41 (QEERNADDDDGEMTEEEKR) is cleaved from the precursor. The cysteines at positions 68 and 74 are disulfide-linked.

This sequence belongs to the frog skin active peptide (FSAP) family. Brevinin subfamily. Expressed by the skin glands.

It is found in the secreted. Shows antibacterial activity against representative Gram-negative and Gram-positive bacterial species, and hemolytic activity. This chain is Brevinin-2Ef, found in Pelophylax lessonae (Pool frog).